Consider the following 502-residue polypeptide: 4,4'-diapophytoene desaturase (4,4'-diaponeurosporene-forming) (502 aa).

Residue 5 to 17 (VIGAGVTGLAAAA) participates in FAD binding.

This sequence belongs to the carotenoid/retinoid oxidoreductase family. CrtN subfamily.

It catalyses the reaction 15-cis-4,4'-diapophytoene + 3 FAD + 3 H(+) = all-trans-4,4'-diaponeurosporene + 3 FADH2. It participates in carotenoid biosynthesis; staphyloxanthin biosynthesis; staphyloxanthin from farnesyl diphosphate: step 2/5. Its function is as follows. Involved in the biosynthesis of the yellow-orange carotenoid staphyloxanthin, which plays a role in the virulence via its protective function against oxidative stress. Catalyzes three successive dehydrogenation reactions that lead to the introduction of three double bonds into 4,4'-diapophytoene (dehydrosqualene), with 4,4'-diapophytofluene and 4,4'-diapo-zeta-carotene as intermediates, and 4,4'-diaponeurosporene (the major deep-yellow pigment in staphylococci strains) as the end product. The sequence is that of 4,4'-diapophytoene desaturase (4,4'-diaponeurosporene-forming) from Staphylococcus aureus (strain COL).